Consider the following 198-residue polypeptide: uncharacterized protein (198 aa).

This is an uncharacterized protein from Homo sapiens (Human).